Consider the following 292-residue polypeptide: Aspartate carbamoyltransferase catalytic subunit (292 aa).

2 residues coordinate carbamoyl phosphate: Arg-49 and Thr-50. Lys-77 is an L-aspartate binding site. Carbamoyl phosphate contacts are provided by Arg-99, His-127, and Gln-130. Residues Arg-161 and Arg-211 each coordinate L-aspartate. Carbamoyl phosphate-binding residues include Gly-250 and Pro-251.

This sequence belongs to the aspartate/ornithine carbamoyltransferase superfamily. ATCase family. In terms of assembly, heterododecamer (2C3:3R2) of six catalytic PyrB chains organized as two trimers (C3), and six regulatory PyrI chains organized as three dimers (R2).

It carries out the reaction carbamoyl phosphate + L-aspartate = N-carbamoyl-L-aspartate + phosphate + H(+). Its pathway is pyrimidine metabolism; UMP biosynthesis via de novo pathway; (S)-dihydroorotate from bicarbonate: step 2/3. Functionally, catalyzes the condensation of carbamoyl phosphate and aspartate to form carbamoyl aspartate and inorganic phosphate, the committed step in the de novo pyrimidine nucleotide biosynthesis pathway. This is Aspartate carbamoyltransferase catalytic subunit from Campylobacter lari (strain RM2100 / D67 / ATCC BAA-1060).